A 368-amino-acid chain; its full sequence is Left-right determination factor 1 (368 aa).

Positions 1 to 21 (MPFLWLCWALWALSLVSLREA) are cleaved as a signal peptide. Residues 22 to 76 (LTGEQILGSLLQQLQLDQPPVLDKADVEGMVIPSHVRTQYVALLQHSHASRSRGK) constitute a propeptide, or 135. N-linked (GlcNAc...) asparagine glycosylation is present at Asn-158. Disulfide bonds link Cys-253–Cys-266, Cys-265–Cys-318, Cys-295–Cys-353, and Cys-299–Cys-355.

Belongs to the TGF-beta family. Post-translationally, the processing of the protein may also occur at the second R-X-X-R site located at AA 132-135. Processing appears to be regulated in a cell-type specific manner.

It localises to the secreted. Required for left-right axis determination as a regulator of LEFTY2 and NODAL. In Mus musculus (Mouse), this protein is Left-right determination factor 1 (Lefty1).